The following is a 369-amino-acid chain: UDP-N-acetylenolpyruvoylglucosamine reductase (369 aa).

The region spanning 29–202 is the FAD-binding PCMH-type domain; that stretch reads VGPIARRVIT…LEVEFALDPS (174 aa). Arg176 is an active-site residue. Catalysis depends on Ser257, which acts as the Proton donor. Residue Glu361 is part of the active site.

This sequence belongs to the MurB family. The cofactor is FAD.

Its subcellular location is the cytoplasm. It catalyses the reaction UDP-N-acetyl-alpha-D-muramate + NADP(+) = UDP-N-acetyl-3-O-(1-carboxyvinyl)-alpha-D-glucosamine + NADPH + H(+). The protein operates within cell wall biogenesis; peptidoglycan biosynthesis. In terms of biological role, cell wall formation. In Mycobacterium tuberculosis (strain ATCC 25177 / H37Ra), this protein is UDP-N-acetylenolpyruvoylglucosamine reductase.